A 268-amino-acid polypeptide reads, in one-letter code: Gasdermin bGSDM (268 aa).

The S-palmitoyl cysteine moiety is linked to residue cysteine 3. The next 4 membrane-spanning stretches (beta stranded) occupy residues 78 to 94, 103 to 121, 168 to 185, and 195 to 211; these read IDLR…AAKI, APSF…FHIE, KMRM…GVDV, and AKLE…RLVF. Residues 248-268 form a C-terminal region region; the sequence is GENMALNLFTEIQDAGFIEVT.

The protein belongs to the bacterial gasdermin family. Monomer in solution. As to quaternary structure, forms large, homooligomeric ring-shaped pores when inserted in membranes. Cleavage by the adjacently encoded protease (G563DRAFT_02009) between Leu-247 and Gly-248 relieves autoinhibition, releasing the N-terminus which initiates loss of cell integrity. Post-translationally, palmitoylation helps stabilize the inactive state; may self-palmitoylate. Palmitoylation is not required for permeabilization of liposomes by the ring-like pores in vitro. Palmitoylation plays a significant role in pore formation.

The protein resides in the cytoplasm. The protein localises to the cell inner membrane. The full-length protein before cleavage is inactive: intramolecular interactions between the N-terminal domain and the C-terminal region, as well as the lipid modification, mediate autoinhibition. The pyroptosis-like-inducing activity is carried by the released N-terminal domain (gasdermin bGSDM, N-terminus). Functionally, precursor of a pore-forming protein involved in defense against bacteriophages. Cleavage of this precursor by its dedicated, neighboring protease (G563DRAFT_02009) releases the active moiety (gasdermin bGSDM, N-terminus) which inserts into membranes, forming pores and triggering cell death. Expression of bGSDM and its protease is highly toxic in E.coli. Cells expressing the gene pair stop dividing and lose membrane integrity. Both proteins are required to kill E.coli. In terms of biological role, pore-forming protein that causes membrane permeabilization via a pyroptosis-like activity. Makes ring-like pores with walls about 50 Angstroms thick and an interior pore diameter of 200-300 Angstroms, when integrated in liposomes. In Runella zeae (strain ATCC BAA-293 / DSM 19591 / LMG 21438 / NS12), this protein is Gasdermin bGSDM.